We begin with the raw amino-acid sequence, 628 residues long: Phosphomethylpyrimidine synthase (628 aa).

The interval 1-22 (MSKQEKTINLSESAQVDQQSVQ) is disordered. Residues 7–22 (TINLSESAQVDQQSVQ) show a composition bias toward polar residues. Residues asparagine 232, methionine 261, tyrosine 290, histidine 326, 346 to 348 (SRG), 387 to 390 (DGLR), and glutamate 426 contribute to the substrate site. Histidine 430 is a binding site for Zn(2+). Tyrosine 453 provides a ligand contact to substrate. Histidine 494 contacts Zn(2+). Residues cysteine 574, cysteine 577, and cysteine 582 each coordinate [4Fe-4S] cluster.

It belongs to the ThiC family. Homodimer. [4Fe-4S] cluster serves as cofactor.

The enzyme catalyses 5-amino-1-(5-phospho-beta-D-ribosyl)imidazole + S-adenosyl-L-methionine = 4-amino-2-methyl-5-(phosphooxymethyl)pyrimidine + CO + 5'-deoxyadenosine + formate + L-methionine + 3 H(+). It participates in cofactor biosynthesis; thiamine diphosphate biosynthesis. In terms of biological role, catalyzes the synthesis of the hydroxymethylpyrimidine phosphate (HMP-P) moiety of thiamine from aminoimidazole ribotide (AIR) in a radical S-adenosyl-L-methionine (SAM)-dependent reaction. The sequence is that of Phosphomethylpyrimidine synthase from Pseudomonas putida (strain W619).